A 285-amino-acid chain; its full sequence is tRNA (cytidine(32)/guanosine(34)-2'-O)-methyltransferase (285 aa).

Gly53, Trp55, Asp83, Asp99, and Asp124 together coordinate S-adenosyl-L-methionine. Lys164 functions as the Proton acceptor in the catalytic mechanism.

It belongs to the class I-like SAM-binding methyltransferase superfamily. RNA methyltransferase RlmE family. TRM7 subfamily.

The protein localises to the cytoplasm. The enzyme catalyses cytidine(32)/guanosine(34) in tRNA + 2 S-adenosyl-L-methionine = 2'-O-methylcytidine(32)/2'-O-methylguanosine(34) in tRNA + 2 S-adenosyl-L-homocysteine + 2 H(+). Its function is as follows. Methylates the 2'-O-ribose of nucleotides at positions 32 and 34 of the tRNA anticodon loop of substrate tRNAs. Requires trm732 for methylation of the cytidine at position 32 of the anticodon loop of substrate tRNAs. Requires trm734 for methylation of the nucleotide at position 34 of the anticodon loop of substrate tRNAs. Methylates tRNA(Phe). In Schizosaccharomyces pombe (strain 972 / ATCC 24843) (Fission yeast), this protein is tRNA (cytidine(32)/guanosine(34)-2'-O)-methyltransferase.